Reading from the N-terminus, the 311-residue chain is Sulfate adenylyltransferase subunit 2 (311 aa).

It belongs to the PAPS reductase family. CysD subfamily. As to quaternary structure, heterodimer composed of CysD, the smaller subunit, and CysN.

It catalyses the reaction sulfate + ATP + H(+) = adenosine 5'-phosphosulfate + diphosphate. The protein operates within sulfur metabolism; hydrogen sulfide biosynthesis; sulfite from sulfate: step 1/3. Its function is as follows. With CysN forms the ATP sulfurylase (ATPS) that catalyzes the adenylation of sulfate producing adenosine 5'-phosphosulfate (APS) and diphosphate, the first enzymatic step in sulfur assimilation pathway. APS synthesis involves the formation of a high-energy phosphoric-sulfuric acid anhydride bond driven by GTP hydrolysis by CysN coupled to ATP hydrolysis by CysD. The protein is Sulfate adenylyltransferase subunit 2 of Caulobacter vibrioides (strain ATCC 19089 / CIP 103742 / CB 15) (Caulobacter crescentus).